Reading from the N-terminus, the 196-residue chain is Probable GTP-binding protein EngB (196 aa).

Residues S22–E193 enclose the EngB-type G domain. GTP contacts are provided by residues G30–S37, G57–L61, D75–G78, T142–D145, and F172–A174. Mg(2+) contacts are provided by S37 and T59.

The protein belongs to the TRAFAC class TrmE-Era-EngA-EngB-Septin-like GTPase superfamily. EngB GTPase family. The cofactor is Mg(2+).

In terms of biological role, necessary for normal cell division and for the maintenance of normal septation. This chain is Probable GTP-binding protein EngB, found in Syntrophus aciditrophicus (strain SB).